The following is a 716-amino-acid chain: uncharacterized protein (716 aa).

Disordered regions lie at residues 84-103 (SPSI…ERYP) and 153-189 (VTDE…SQGQ). Ser-97 is subject to Phosphoserine. Residues Lys-201, Lys-204, Lys-237, Lys-283, and Lys-626 each participate in a glycyl lysine isopeptide (Lys-Gly) (interchain with G-Cter in SUMO2) cross-link.

This is an uncharacterized protein from Mus musculus (Mouse).